A 73-amino-acid polypeptide reads, in one-letter code: Small ribosomal subunit protein bS18 (73 aa).

The protein belongs to the bacterial ribosomal protein bS18 family. As to quaternary structure, part of the 30S ribosomal subunit. Forms a tight heterodimer with protein bS6.

Binds as a heterodimer with protein bS6 to the central domain of the 16S rRNA, where it helps stabilize the platform of the 30S subunit. This chain is Small ribosomal subunit protein bS18, found in Neorickettsia sennetsu (strain ATCC VR-367 / Miyayama) (Ehrlichia sennetsu).